The sequence spans 310 residues: UPF0324 membrane protein VP0936 (310 aa).

10 helical membrane-spanning segments follow: residues 7–29 (PFGL…LVIG), 44–63 (IASF…GFGI), 75–94 (GIGL…SLIA), 104–126 (AYLI…APAI), 133–155 (IGLA…PVIG), 165–187 (FGTW…SAYG), 199–218 (LARA…IFSR), 228–250 (LVIP…FPQL), 257–279 (IFTI…ISIS), and 289–308 (LLFG…SWLV).

This sequence belongs to the UPF0324 family.

It localises to the cell membrane. The sequence is that of UPF0324 membrane protein VP0936 from Vibrio parahaemolyticus serotype O3:K6 (strain RIMD 2210633).